The sequence spans 307 residues: Cyclin-dependent kinase 5 activator 1 (307 aa).

Glycine 2 carries the N-myristoyl glycine lipid modification. A Phosphoserine; by CDK5 modification is found at serine 8. Positions 97–133 (TFAQPPPAQPPAPPASQLSGSQTGVSSSVKKAPHPAI) are disordered. Over residues 100–110 (QPPPAQPPAPP) the composition is skewed to pro residues. A compositionally biased stretch (polar residues) spans 112 to 125 (SQLSGSQTGVSSSV). Threonine 138 carries the phosphothreonine; by CDK5 modification.

Belongs to the cyclin-dependent kinase 5 activator family. Heterodimer composed of a catalytic subunit CDK5 and a regulatory subunit CDK5R1 (p25) and macromolecular complex composed of at least CDK5, CDK5R1 (p35) and CDK5RAP1 or CDK5RAP2 or CDK5RAP3. Only the heterodimer shows kinase activity. Interacts with EPHA4 and NGEF; may mediate the activation of NGEF by EPHA4. Interacts with RASGRF2. The complex p35/CDK5 interacts with CLOCK. In terms of processing, the p35 form is proteolytically cleaved by calpain, giving rise to the p25 form. P35 has a 5 to 10 fold shorter half-life compared to p25. The conversion results in deregulation of the CDK5 kinase: p25/CDK5 kinase displays an increased and altered tau phosphorylation in comparison to the p35/CDK5 kinase in vivo. Post-translationally, myristoylated. A proper myristoylation signal is essential for the proper distribution of p35. Phosphorylation at Ser-8 and Thr-138 by CDK5 prevents calpain-mediated proteolysis. In terms of processing, ubiquitinated, leading to its degradation: degradation of p35 by proteasome results in down-regulation of CDK5 activity. During this process, CDK5 phosphorylates p35 and induces its ubiquitination and subsequent degradation. Ubiquitinated by the CRL2(FEM1B) complex, which recognizes the -Gly-Leu-Asp-Arg C-degron at the C-terminus, leading to its degradation. As to expression, brain and neuron specific.

It is found in the cell membrane. The protein localises to the cell projection. It localises to the neuron projection. Its subcellular location is the nucleus. The protein resides in the cytoplasm. It is found in the perinuclear region. The protein localises to the perikaryon. In terms of biological role, p35 is a neuron specific activator of CDK5. The complex p35/CDK5 is required for neurite outgrowth and cortical lamination. Involved in dendritic spine morphogenesis by mediating the EFNA1-EPHA4 signaling. Activator of TPKII. The complex p35/CDK5 participates in the regulation of the circadian clock by modulating the function of CLOCK protein: phosphorylates CLOCK at 'Thr-451' and 'Thr-461' and regulates the transcriptional activity of the CLOCK-BMAL1 heterodimer in association with altered stability and subcellular distribution. This Rattus norvegicus (Rat) protein is Cyclin-dependent kinase 5 activator 1 (Cdk5r1).